The following is a 339-amino-acid chain: Tetraacyldisaccharide 4'-kinase (339 aa).

An ATP-binding site is contributed by 62–69; it reads VAGGTGKT.

This sequence belongs to the LpxK family.

The catalysed reaction is a lipid A disaccharide + ATP = a lipid IVA + ADP + H(+). It participates in glycolipid biosynthesis; lipid IV(A) biosynthesis; lipid IV(A) from (3R)-3-hydroxytetradecanoyl-[acyl-carrier-protein] and UDP-N-acetyl-alpha-D-glucosamine: step 6/6. In terms of biological role, transfers the gamma-phosphate of ATP to the 4'-position of a tetraacyldisaccharide 1-phosphate intermediate (termed DS-1-P) to form tetraacyldisaccharide 1,4'-bis-phosphate (lipid IVA). This is Tetraacyldisaccharide 4'-kinase from Xylella fastidiosa (strain 9a5c).